A 209-amino-acid polypeptide reads, in one-letter code: Orotate phosphoribosyltransferase (209 aa).

Residues Arg-96, Lys-100, His-102, and 122–130 each bind 5-phospho-alpha-D-ribose 1-diphosphate; that span reads EDLISTGGS. An orotate-binding site is contributed by Ser-126.

It belongs to the purine/pyrimidine phosphoribosyltransferase family. PyrE subfamily. As to quaternary structure, homodimer. Mg(2+) is required as a cofactor.

It catalyses the reaction orotidine 5'-phosphate + diphosphate = orotate + 5-phospho-alpha-D-ribose 1-diphosphate. It participates in pyrimidine metabolism; UMP biosynthesis via de novo pathway; UMP from orotate: step 1/2. Its function is as follows. Catalyzes the transfer of a ribosyl phosphate group from 5-phosphoribose 1-diphosphate to orotate, leading to the formation of orotidine monophosphate (OMP). The protein is Orotate phosphoribosyltransferase of Streptococcus pyogenes serotype M2 (strain MGAS10270).